The sequence spans 530 residues: Glucose-6-phosphate isomerase (530 aa).

Glu356 functions as the Proton donor in the catalytic mechanism. Residues His387 and Lys502 contribute to the active site.

Belongs to the GPI family.

The protein resides in the cytoplasm. The enzyme catalyses alpha-D-glucose 6-phosphate = beta-D-fructose 6-phosphate. It functions in the pathway carbohydrate biosynthesis; gluconeogenesis. Its pathway is carbohydrate degradation; glycolysis; D-glyceraldehyde 3-phosphate and glycerone phosphate from D-glucose: step 2/4. Its function is as follows. Catalyzes the reversible isomerization of glucose-6-phosphate to fructose-6-phosphate. The sequence is that of Glucose-6-phosphate isomerase from Borrelia garinii subsp. bavariensis (strain ATCC BAA-2496 / DSM 23469 / PBi) (Borreliella bavariensis).